The chain runs to 465 residues: Lipase 10 (465 aa).

The first 16 residues, 1 to 16 (MKTLLIFLAFLSSIFA), serve as a signal peptide directing secretion. Cys112 and Cys285 form a disulfide bridge. The active-site Charge relay system is the Ser196. Residues Asn231 and Asn319 are each glycosylated (N-linked (GlcNAc...) asparagine). Catalysis depends on charge relay system residues Asp348 and His381. A disulfide bridge links Cys364 with Cys409.

The protein belongs to the AB hydrolase superfamily. Lipase family. Class Lip subfamily.

It localises to the secreted. It carries out the reaction a triacylglycerol + H2O = a diacylglycerol + a fatty acid + H(+). Secreted lipase that is able to hydrolyze both the neutral triacylglycerols and the monopalmitate ester Tween 40, allowing the use of hydrolyzed products as carbon sources. Has broad lipolytic activity, which may be important for colonization and subsequent infection, therefore contributing to the persistence and virulence in human tissue. The sequence is that of Lipase 10 from Candida albicans (strain SC5314 / ATCC MYA-2876) (Yeast).